The following is a 281-amino-acid chain: Acyl-[acyl-carrier-protein]--UDP-N-acetylglucosamine O-acyltransferase (281 aa).

The protein belongs to the transferase hexapeptide repeat family. LpxA subfamily. In terms of assembly, homotrimer.

It localises to the cytoplasm. The catalysed reaction is a (3R)-hydroxyacyl-[ACP] + UDP-N-acetyl-alpha-D-glucosamine = a UDP-3-O-[(3R)-3-hydroxyacyl]-N-acetyl-alpha-D-glucosamine + holo-[ACP]. It functions in the pathway glycolipid biosynthesis; lipid IV(A) biosynthesis; lipid IV(A) from (3R)-3-hydroxytetradecanoyl-[acyl-carrier-protein] and UDP-N-acetyl-alpha-D-glucosamine: step 1/6. In terms of biological role, involved in the biosynthesis of lipid A, a phosphorylated glycolipid that anchors the lipopolysaccharide to the outer membrane of the cell. The protein is Acyl-[acyl-carrier-protein]--UDP-N-acetylglucosamine O-acyltransferase of Rickettsia bellii (strain OSU 85-389).